A 183-amino-acid chain; its full sequence is Thioredoxin-like protein CITRX, chloroplastic (183 aa).

The transit peptide at 1–81 (MALVQSRTFP…REDYLVKKLS (81 aa)) directs the protein to the chloroplast. Residues 82–183 (AQELQELVKG…MMHDIIDNEM (102 aa)) form the Thioredoxin domain. Active-site nucleophile residues include Cys-106 and Cys-109. Cys-106 and Cys-109 are disulfide-bonded.

The protein belongs to the thioredoxin family. Plant CITRX-type subfamily. Interacts with FLN1 and FLN2. Interacts with MRL7.

The protein resides in the plastid. It is found in the chloroplast. Its function is as follows. Thiol-disulfide oxidoreductase that plays a role in proper chloroplast development, most likely through regulating plastid-encoded polymerase (PEP) dependent chloroplast transcription. Acts as a component of the transcriptionally active plastid chromosome that is required for plastid gene expression. This chain is Thioredoxin-like protein CITRX, chloroplastic, found in Arabidopsis thaliana (Mouse-ear cress).